Consider the following 290-residue polypeptide: TP53-target gene 5 protein (290 aa).

Positions 1-13 are enriched in basic residues; that stretch reads MSPSAKKRPKNSR. Disordered regions lie at residues 1–29 and 114–178; these read MSPSAKKRPKNSRVSKMQDEKLRDETEQP and KLES…RQPL. Composition is skewed to basic and acidic residues over residues 16–26, 114–130, and 138–167; these read KMQDEKLRDET, KLESTGDPKKKEYKEWK, and RNKEKTSLAAMPRKEKHIEPEVPRTSRDDS.

In terms of assembly, interacts with p53/TP53. As to expression, highly expressed in heart, brain and small intestine. Less abundant in skeletal muscle, spleen, prostate, ovary and colon. A smaller transcript is expressed specifically in the testis.

It is found in the cytoplasm. The protein resides in the nucleus. In terms of biological role, may play a significant role in p53/TP53-mediating signaling pathway. This is TP53-target gene 5 protein (TP53TG5) from Homo sapiens (Human).